Reading from the N-terminus, the 194-residue chain is Protein GrpE (194 aa).

Polar residues predominate over residues 1–14 (MENTQENPTSQNPT). Positions 1 to 50 (MENTQENPTSQNPTPADETARQAAEAAAPQQEAAANAATDSPVNAEQSAL) are disordered. The segment covering 21 to 38 (RQAAEAAAPQQEAAANAA) has biased composition (low complexity).

It belongs to the GrpE family. Homodimer.

It localises to the cytoplasm. In terms of biological role, participates actively in the response to hyperosmotic and heat shock by preventing the aggregation of stress-denatured proteins, in association with DnaK and GrpE. It is the nucleotide exchange factor for DnaK and may function as a thermosensor. Unfolded proteins bind initially to DnaJ; upon interaction with the DnaJ-bound protein, DnaK hydrolyzes its bound ATP, resulting in the formation of a stable complex. GrpE releases ADP from DnaK; ATP binding to DnaK triggers the release of the substrate protein, thus completing the reaction cycle. Several rounds of ATP-dependent interactions between DnaJ, DnaK and GrpE are required for fully efficient folding. The protein is Protein GrpE of Paraburkholderia phytofirmans (strain DSM 17436 / LMG 22146 / PsJN) (Burkholderia phytofirmans).